Reading from the N-terminus, the 159-residue chain is 3-hydroxyacyl-[acyl-carrier-protein] dehydratase FabZ (159 aa).

The active site involves histidine 58.

Belongs to the thioester dehydratase family. FabZ subfamily.

The protein resides in the cytoplasm. It carries out the reaction a (3R)-hydroxyacyl-[ACP] = a (2E)-enoyl-[ACP] + H2O. Functionally, involved in unsaturated fatty acids biosynthesis. Catalyzes the dehydration of short chain beta-hydroxyacyl-ACPs and long chain saturated and unsaturated beta-hydroxyacyl-ACPs. This is 3-hydroxyacyl-[acyl-carrier-protein] dehydratase FabZ from Helicobacter pylori (strain G27).